Consider the following 134-residue polypeptide: MAVFKLRVLTPEKIFFEGDAEQLIAKTTSGYVGILKGHAPYVASIVPSEMKIRSDGSFRSAAISDGIVKVSEDSMVTVLTSAIEWSDEIDVARAERSKARAEKQLKAETSRTEFDLAERQLKRAVNRISVANKK.

This sequence belongs to the ATPase epsilon chain family. As to quaternary structure, F-type ATPases have 2 components, CF(1) - the catalytic core - and CF(0) - the membrane proton channel. CF(1) has five subunits: alpha(3), beta(3), gamma(1), delta(1), epsilon(1). CF(0) has three main subunits: a, b and c.

It is found in the cell membrane. In terms of biological role, produces ATP from ADP in the presence of a proton gradient across the membrane. In Ruminococcus albus (strain ATCC 27210 / DSM 20455 / JCM 14654 / NCDO 2250 / 7), this protein is ATP synthase epsilon chain.